A 530-amino-acid chain; its full sequence is Arginine--tRNA ligase (530 aa).

Positions alanine 113–histidine 123 match the 'HIGH' region motif.

The protein belongs to the class-I aminoacyl-tRNA synthetase family. As to quaternary structure, monomer.

It localises to the cytoplasm. It catalyses the reaction tRNA(Arg) + L-arginine + ATP = L-arginyl-tRNA(Arg) + AMP + diphosphate. This Campylobacter jejuni subsp. doylei (strain ATCC BAA-1458 / RM4099 / 269.97) protein is Arginine--tRNA ligase.